Here is a 255-residue protein sequence, read N- to C-terminus: Ribonuclease HII (255 aa).

Residues 72-255 (AIICGIDEVG…KSFEPIKSLL (184 aa)) form the RNase H type-2 domain. A divalent metal cation is bound by residues Asp78, Glu79, and Asp170.

The protein belongs to the RNase HII family. It depends on Mn(2+) as a cofactor. Mg(2+) serves as cofactor.

It localises to the cytoplasm. It catalyses the reaction Endonucleolytic cleavage to 5'-phosphomonoester.. Its function is as follows. Endonuclease that specifically degrades the RNA of RNA-DNA hybrids. This is Ribonuclease HII from Staphylococcus aureus (strain bovine RF122 / ET3-1).